Consider the following 425-residue polypeptide: Gamma-glutamyl phosphate reductase (425 aa).

The protein belongs to the gamma-glutamyl phosphate reductase family.

It localises to the cytoplasm. The catalysed reaction is L-glutamate 5-semialdehyde + phosphate + NADP(+) = L-glutamyl 5-phosphate + NADPH + H(+). The protein operates within amino-acid biosynthesis; L-proline biosynthesis; L-glutamate 5-semialdehyde from L-glutamate: step 2/2. Catalyzes the NADPH-dependent reduction of L-glutamate 5-phosphate into L-glutamate 5-semialdehyde and phosphate. The product spontaneously undergoes cyclization to form 1-pyrroline-5-carboxylate. The polypeptide is Gamma-glutamyl phosphate reductase (Xylella fastidiosa (strain M23)).